The following is a 60-amino-acid chain: Large ribosomal subunit protein bL32 (60 aa).

The protein belongs to the bacterial ribosomal protein bL32 family.

In Kosmotoga olearia (strain ATCC BAA-1733 / DSM 21960 / TBF 19.5.1), this protein is Large ribosomal subunit protein bL32.